The chain runs to 154 residues: Protein disulfide-isomerase LQY1, chloroplastic (154 aa).

Residues 1-43 constitute a chloroplast transit peptide; sequence MPVSAPSPPRLHSPFIHCPINFTPSSFSARNLRSPSTSYPRIK. Residues 51-71 traverse the membrane as a helical segment; the sequence is VVAISVGVASVALGIGIPVFY. The CR-type zinc finger occupies 77 to 147; the sequence is NAAKRENTQP…SGVQPRYLDR (71 aa). Positions 87, 90, 98, 101, 121, 124, 132, and 135 each coordinate Zn(2+).

This sequence belongs to the BSD2 chaperone family. In terms of assembly, interacts with the photosystem II core subunits. Interacts with HHL1. The cofactor is Zn(2+).

Its subcellular location is the plastid. The protein localises to the chloroplast thylakoid membrane. It carries out the reaction Catalyzes the rearrangement of -S-S- bonds in proteins.. Its function is as follows. Protein disulfide-isomerase probably involved upon formation of a complex with HHL1 in maintaining photosystem II (PSII) activity under high light by regulating repair and reassembly of PSII complexes. The protein is Protein disulfide-isomerase LQY1, chloroplastic of Arabidopsis thaliana (Mouse-ear cress).